Here is a 122-residue protein sequence, read N- to C-terminus: Biogenesis of lysosome-related organelles complex 1 subunit CNL1 (122 aa).

Positions 1-10 (MQDNSSHSRE) are enriched in basic and acidic residues. Residues 1 to 21 (MQDNSSHSRESASAGDDPLGI) form a disordered region. A coiled-coil region spans residues 63 to 95 (ENTIDKNIAKFKELLEKCDTLENHYEMLNQLAI).

This sequence belongs to the BLOC1S4 family. As to quaternary structure, component of the biogenesis of lysosome-related organelles complex-1 (BLOC-1) composed of at least BLI1, BLS1, CNL1, KXD1, SNN1 and VAB2.

It is found in the cytoplasm. In terms of biological role, component of the biogenesis of lysosome-related organelles complex-1 (BLOC-1), a complex that is involved in endosomal cargo sorting. This is Biogenesis of lysosome-related organelles complex 1 subunit CNL1 (CLN1) from Saccharomyces cerevisiae (strain RM11-1a) (Baker's yeast).